A 421-amino-acid polypeptide reads, in one-letter code: MIILALNCGSSSVKYQLFDWERKEVVAKGMVERVIIGDSFIMHEVPGRETYRKEYECPDHQVAIDLIIRTVVDADHGVLKDINEISAVGHRVVHGGEMFTRSVLIDEKVLDAVKEVQHLAPLHNPPNIAGIEAAQAVLPHVPHVAIFDTAFHQTMPEHAYLYPLPYEWYEKYGVRRYGFHGTSHLYVSKRAAVLLGKTPSECNIITMHIGNGVSHCAIKGGVSVDTSMGLTPLEGAVMGTRCGDIDPAIPAFMMQKENLSAKEIDSILNKKSGVLGVTGRFTDRRDVIEHASNGDHRCKVALDIEAYRLKKYIGTYMAVLGRLDAVVFTAGVGEMGWPIREKTIEGLEGIGIKLDRERNKGAMTRKRESLITTDDSPIKVFVIPTDEELVFTEDVVAILNGTYTDHMNFDYSFARTDFVRK.

Mg(2+) is bound at residue asparagine 7. An ATP-binding site is contributed by lysine 14. Substrate is bound at residue arginine 91. Catalysis depends on aspartate 148, which acts as the Proton donor/acceptor. ATP contacts are provided by residues 208–212 and 283–285; these read HIGNG and DRR. Glutamate 387 contributes to the Mg(2+) binding site.

Belongs to the acetokinase family. In terms of assembly, homodimer. It depends on Mg(2+) as a cofactor. Mn(2+) serves as cofactor.

The protein localises to the cytoplasm. The catalysed reaction is acetate + ATP = acetyl phosphate + ADP. It participates in metabolic intermediate biosynthesis; acetyl-CoA biosynthesis; acetyl-CoA from acetate: step 1/2. Its function is as follows. Catalyzes the formation of acetyl phosphate from acetate and ATP. Can also catalyze the reverse reaction. This Geobacter sulfurreducens (strain ATCC 51573 / DSM 12127 / PCA) protein is Acetate kinase.